A 69-amino-acid polypeptide reads, in one-letter code: Pleurain-A3 (69 aa).

Positions Met-1–Cys-22 are cleaved as a signal peptide. Residues Lys-23 to Arg-43 constitute a propeptide that is removed on maturation. A disulfide bridge connects residues Cys-63 and Cys-69.

The protein belongs to the frog skin active peptide (FSAP) family. Pleurain subfamily. Expressed by the skin glands.

The protein localises to the secreted. Antimicrobial peptide. Has activity against Gram-positive and -negative bacteria, and fungi. Has little hemolytic activity on red blood cells. In Nidirana pleuraden (Yunnan pond frog), this protein is Pleurain-A3.